Here is a 245-residue protein sequence, read N- to C-terminus: 1-(5-phosphoribosyl)-5-[(5-phosphoribosylamino)methylideneamino] imidazole-4-carboxamide isomerase (245 aa).

D13 serves as the catalytic Proton acceptor. D132 acts as the Proton donor in catalysis.

This sequence belongs to the HisA/HisF family.

It localises to the cytoplasm. The catalysed reaction is 1-(5-phospho-beta-D-ribosyl)-5-[(5-phospho-beta-D-ribosylamino)methylideneamino]imidazole-4-carboxamide = 5-[(5-phospho-1-deoxy-D-ribulos-1-ylimino)methylamino]-1-(5-phospho-beta-D-ribosyl)imidazole-4-carboxamide. Its pathway is amino-acid biosynthesis; L-histidine biosynthesis; L-histidine from 5-phospho-alpha-D-ribose 1-diphosphate: step 4/9. The protein is 1-(5-phosphoribosyl)-5-[(5-phosphoribosylamino)methylideneamino] imidazole-4-carboxamide isomerase of Frankia alni (strain DSM 45986 / CECT 9034 / ACN14a).